The primary structure comprises 192 residues: uncharacterized protein (192 aa).

The Nudix hydrolase domain maps to 29-160; the sequence is QRQAAVLVPI…PLDIERKQQR (132 aa). Residues 67–89 carry the Nudix box motif; it reads GAADKTDRSIIETALREAQEEVA. Mg(2+)-binding residues include glutamate 83 and glutamate 87.

This sequence belongs to the Nudix hydrolase family. PCD1 subfamily. It depends on Mn(2+) as a cofactor. Mg(2+) serves as cofactor.

Functionally, probably mediates the hydrolysis of some nucleoside diphosphate derivatives. This is an uncharacterized protein from Pectobacterium atrosepticum (strain SCRI 1043 / ATCC BAA-672) (Erwinia carotovora subsp. atroseptica).